We begin with the raw amino-acid sequence, 305 residues long: Homoserine O-acetyltransferase (305 aa).

Residue Cys142 is the Acyl-thioester intermediate of the active site. Lys163 and Ser192 together coordinate substrate. Catalysis depends on His233, which acts as the Proton acceptor. Glu235 is a catalytic residue. A substrate-binding site is contributed by Arg247.

The protein belongs to the MetA family.

The protein resides in the cytoplasm. The enzyme catalyses L-homoserine + acetyl-CoA = O-acetyl-L-homoserine + CoA. The protein operates within amino-acid biosynthesis; L-methionine biosynthesis via de novo pathway; O-acetyl-L-homoserine from L-homoserine: step 1/1. Functionally, transfers an acetyl group from acetyl-CoA to L-homoserine, forming acetyl-L-homoserine. This Methanomassiliicoccus intestinalis (strain Issoire-Mx1) protein is Homoserine O-acetyltransferase.